Consider the following 182-residue polypeptide: ATP synthase subunit delta (182 aa).

The protein belongs to the ATPase delta chain family. As to quaternary structure, F-type ATPases have 2 components, F(1) - the catalytic core - and F(0) - the membrane proton channel. F(1) has five subunits: alpha(3), beta(3), gamma(1), delta(1), epsilon(1). F(0) has three main subunits: a(1), b(2) and c(10-14). The alpha and beta chains form an alternating ring which encloses part of the gamma chain. F(1) is attached to F(0) by a central stalk formed by the gamma and epsilon chains, while a peripheral stalk is formed by the delta and b chains.

The protein resides in the cell membrane. Its function is as follows. F(1)F(0) ATP synthase produces ATP from ADP in the presence of a proton or sodium gradient. F-type ATPases consist of two structural domains, F(1) containing the extramembraneous catalytic core and F(0) containing the membrane proton channel, linked together by a central stalk and a peripheral stalk. During catalysis, ATP synthesis in the catalytic domain of F(1) is coupled via a rotary mechanism of the central stalk subunits to proton translocation. This protein is part of the stalk that links CF(0) to CF(1). It either transmits conformational changes from CF(0) to CF(1) or is implicated in proton conduction. This is ATP synthase subunit delta from Alkalihalophilus pseudofirmus (strain ATCC BAA-2126 / JCM 17055 / OF4) (Bacillus pseudofirmus).